We begin with the raw amino-acid sequence, 622 residues long: UvrABC system protein C (622 aa).

In terms of domain architecture, GIY-YIG spans 12–91 (SSPGVYIMKD…IKKYRPKYNF (80 aa)). In terms of domain architecture, UVR spans 201–236 (REILKIFRERMSAAAAAEKYEKAARFRDLIRSIEVT).

This sequence belongs to the UvrC family. Interacts with UvrB in an incision complex.

The protein localises to the cytoplasm. The UvrABC repair system catalyzes the recognition and processing of DNA lesions. UvrC both incises the 5' and 3' sides of the lesion. The N-terminal half is responsible for the 3' incision and the C-terminal half is responsible for the 5' incision. This chain is UvrABC system protein C, found in Geotalea daltonii (strain DSM 22248 / JCM 15807 / FRC-32) (Geobacter daltonii).